The primary structure comprises 250 residues: Small ribosomal subunit protein uS3 (250 aa).

In terms of domain architecture, KH type-2 spans 39–107 (VREFLTKKLK…PAQVSINEID (69 aa)). The interval 214–250 (VMNPAPQEERPAKRGRGRGEGQERRGRRSDRAADKGE) is disordered. The span at 220-250 (QEERPAKRGRGRGEGQERRGRRSDRAADKGE) shows a compositional bias: basic and acidic residues.

The protein belongs to the universal ribosomal protein uS3 family. In terms of assembly, part of the 30S ribosomal subunit. Forms a tight complex with proteins S10 and S14.

Functionally, binds the lower part of the 30S subunit head. Binds mRNA in the 70S ribosome, positioning it for translation. The protein is Small ribosomal subunit protein uS3 of Acinetobacter baylyi (strain ATCC 33305 / BD413 / ADP1).